A 436-amino-acid polypeptide reads, in one-letter code: AMSH-like protease (436 aa).

M1 carries the N-acetylmethionine modification. Phosphoserine occurs at positions 25 and 242. The region spanning 269–397 (VVLSRDLCHK…IFRLTNAGML (129 aa)) is the MPN domain. Residues H347, H349, D360, H362, C402, H408, and H410 each contribute to the Zn(2+) site. A JAMM motif motif is present at residues 347–360 (HTHPTQTAFLSSVD).

Belongs to the peptidase M67C family. Zn(2+) is required as a cofactor. As to expression, ubiquitously expressed. Isoform 1 is widely expressed while isoform 2 is testis-specific.

Functionally, zinc metalloprotease that specifically cleaves 'Lys-63'-linked polyubiquitin chains. Acts as a positive regulator of the TORC1 signaling pathway by mediating 'Lys-63'-linked deubiquitination of SESN2, thereby inhibiting SESN2-interaction with the GATOR2 complex. Does not cleave 'Lys-48'-linked polyubiquitin chains. This Mus musculus (Mouse) protein is AMSH-like protease (Stambpl1).